We begin with the raw amino-acid sequence, 326 residues long: MPALSLIALLSLVSTAFARQWEVHPPQQQGRHWAQICSGNPFNRIRGCDRYGCGNYGASRQGKGEKHKGVDVICTDGSIVYAPFSGQLSGPIRFFHNGNAIDDGVQISGSGYCVKLVCIHPIRYHGQIQKGQQLGRMLPMQKVFPGIVSHIHVENCDQSDPTHLLRPIPDISPPFPQQDAHWAVVCAGNPTNEIRGCDKYGCGYFGAPRRNGKGEKHKGVDVICADGATVYAPFSGELSGPVKFFHNGNAIDDGVQIRGSGFCVKLLCIHPIRYNGRISKGQVLGRMLPMQRVFPGIISHIHVENCDRSDPTSNLERGKGESEMEV.

The N-terminal stretch at 1–18 (MPALSLIALLSLVSTAFA) is a signal peptide. Repeat copies occupy residues 28–162 (QQGR…SDPT) and 177–312 (QQDA…SDPT). Intrachain disulfides connect C37–C74, C48–C53, and C113–C156. Zn(2+)-binding residues include H67, D71, and H152. The segment at 307 to 326 (DRSDPTSNLERGKGESEMEV) is disordered.

Belongs to the LECT2/MIM-1 family. In terms of processing, substrate for arginine-specific ADP-ribosyltransferase.

The protein localises to the cytoplasmic granule. The sequence is that of Myeloid protein 1 (MIM1) from Gallus gallus (Chicken).